The chain runs to 595 residues: Guanylate-binding protein 3 (595 aa).

The interval 1–309 (MAPEIHMTGP…NAISRGDLPC (309 aa)) is GTPase domain (Globular). The GB1/RHD3-type G domain maps to 35 to 276 (TQPVVVVAIV…FCSYIFSNSK (242 aa)). GTP is bound by residues 45 to 52 (GLYRTGKS), 67 to 69 (LGS), and 97 to 101 (DTEGL). A coiled-coil region spans residues 482–595 (EKEKEIEVEC…KRYMSHKLKI (114 aa)).

It belongs to the TRAFAC class dynamin-like GTPase superfamily. GB1/RHD3 GTPase family. GB1 subfamily. As to quaternary structure, heterodimer with other family members, including GBP1, GBP2 and GBP5. Dimerization regulates subcellular location.

Its subcellular location is the cytoplasm. It is found in the perinuclear region. It localises to the golgi apparatus membrane. The catalysed reaction is GTP + H2O = GDP + phosphate + H(+). Its function is as follows. Interferon (IFN)-inducible GTPase that plays important roles in innate immunity against a diverse range of bacterial, viral and protozoan pathogens. Hydrolyzes GTP very efficiently; GDP rather than GMP is the major reaction product. Following infection, recruited to the pathogen-containing vacuoles or vacuole-escaped bacteria and acts as a positive regulator of inflammasome assembly by promoting the release of inflammasome ligands from bacteria. Acts by promoting lysis of pathogen-containing vacuoles, releasing pathogens into the cytosol. Following pathogen release in the cytosol, promotes recruitment of proteins that mediate bacterial cytolysis: this liberates ligands that are detected by inflammasomes, such as lipopolysaccharide (LPS) that activates the non-canonical CASP4/CASP11 inflammasome or double-stranded DNA (dsDNA) that activates the AIM2 inflammasome. Exhibits antiviral activity against influenza virus. In terms of biological role, shows the most prominent antiviral activity in epithelial cells. This chain is Guanylate-binding protein 3 (GBP3), found in Homo sapiens (Human).